The following is a 482-amino-acid chain: Glucose starvation modulator protein 1 (482 aa).

The segment at residues 20 to 48 (CVFCHEKHLQCDVGRPCQNCEKRNIGESC) is a DNA-binding region (zn(2)-C6 fungal-type). Positions 350-422 (LLEYENMSKM…KLFNEYLAFS (73 aa)) constitute a PAS domain.

This sequence belongs to the ERT1/acuK family.

The protein resides in the nucleus. Its function is as follows. Transcription factor which regulates nonfermentable carbon utilization. This is Glucose starvation modulator protein 1 (GSM1) from Eremothecium gossypii (strain ATCC 10895 / CBS 109.51 / FGSC 9923 / NRRL Y-1056) (Yeast).